A 218-amino-acid chain; its full sequence is Large ribosomal subunit protein uL4 (218 aa).

A disordered region spans residues 46–100 (ARQGTHSTKTRAEVRGGGRKPFRQKGTGRARQGSIRAPHFTGGGISHGPKPRDYA). Residues 62 to 73 (GGRKPFRQKGTG) show a composition bias toward basic residues.

The protein belongs to the universal ribosomal protein uL4 family. In terms of assembly, part of the 50S ribosomal subunit.

Its function is as follows. One of the primary rRNA binding proteins, this protein initially binds near the 5'-end of the 23S rRNA. It is important during the early stages of 50S assembly. It makes multiple contacts with different domains of the 23S rRNA in the assembled 50S subunit and ribosome. Functionally, forms part of the polypeptide exit tunnel. In Corynebacterium efficiens (strain DSM 44549 / YS-314 / AJ 12310 / JCM 11189 / NBRC 100395), this protein is Large ribosomal subunit protein uL4.